The chain runs to 555 residues: Lysine--tRNA ligase (555 aa).

A 'HIGH' region motif is present at residues 37-45 (TSGRLHVGN). Residues 301-305 (AMSSS) carry the 'KMSKS' region motif.

This sequence belongs to the class-I aminoacyl-tRNA synthetase family.

It localises to the cytoplasm. It carries out the reaction tRNA(Lys) + L-lysine + ATP = L-lysyl-tRNA(Lys) + AMP + diphosphate. The chain is Lysine--tRNA ligase from Methanopyrus kandleri (strain AV19 / DSM 6324 / JCM 9639 / NBRC 100938).